The primary structure comprises 95 residues: Large ribosomal subunit protein bL28 (95 aa).

Positions 1 to 22 are disordered; that stretch reads MSRRCELTGKGPMTGNNVSHAN.

It belongs to the bacterial ribosomal protein bL28 family.

The protein is Large ribosomal subunit protein bL28 of Ruegeria pomeroyi (strain ATCC 700808 / DSM 15171 / DSS-3) (Silicibacter pomeroyi).